Here is an 892-residue protein sequence, read N- to C-terminus: Ice-binding protein 1 (892 aa).

Positions 1–23 (MNHSIKKTYLVFTMLLGFILLAG) are cleaved as a signal peptide. A lipid anchor (N-palmitoyl cysteine) is attached at C24. The S-diacylglycerol cysteine moiety is linked to residue C24. BIG2 domains lie at 43 to 111 (TSIA…ITAS), 134 to 205 (TALA…SLGS), 221 to 288 (SIAL…ITAD), 306 to 386 (TSIM…TVTV), 392 to 471 (TSIA…TNLT), 478 to 558 (NSIV…NLTV), and 565 to 638 (SIDV…QASL). Residues 866–869 (TGAN) carry the Ice-binding site motif (T-A/G-X-T/N) motif.

This sequence belongs to the ice-binding protein family.

The protein resides in the cell outer membrane. Functionally, ice-binding adhesion protein that adsorbs this bacterium onto ice to maintain a favorable position in its aquatic habitat. Inhibits growth of the ice crystals. Has high thermal hysteresis (TH) activity, which is the ability to lower the freezing point of an aqueous solution below its melting point. The TH activity of this protein is approximately 1.4 degrees Celsius at 25 uM and little below 2 degrees Celsius at 80 uM. This Shewanella frigidimarina (strain NCIMB 400) protein is Ice-binding protein 1.